Reading from the N-terminus, the 602-residue chain is MNGGAERAMRSLPSLGGLALLCCAAAAAAAAVASAASAGNVTGGGGAAGQVDASPGPGLRGEPSHPFPRATAPTAQAPRTGPPRATVHRPLAATSPAQSPETTPLWATAGPSSTTFQAPLGPSPTTPPAAERTSTTSQAPTRPAPTTLSTTTGPAPTTPVATTVPAPTTPRTPTPDLPSSSNSSVLPTPPATEAPSSPPPEYVCNCSVVGSLNVNRCNQTTGQCECRPGYQGLHCETCKEGFYLNYTSGLCQPCDCSPHGALSIPCNSSGKCQCKVGVIGSICDRCQDGYYGFSKNGCLPCQCNNRSASCDALTGACLNCQENSKGNHCEECKEGFYQSPDATKECLRCPCSAVTSTGSCSIKSSELEPECDQCKDGYIGPNCNKCENGYYNFDSICRKCQCHGHVDPVKTPKICKPESGECINCLHNTTGFWCENCLEGYVHDLEGNCIKKEVILPTPEGSTILVSNASLTTSVPTPVINSTFTPTTLQTIFSVSTSENSTSALADVSWTQFNIIILTVIIIVVVLLMGFVGAVYMYREYQNRKLNAPFWTIELKEDNISFSSYHDSIPNADVSGLLEDDGNEVAPNGQLTLTTPIHNYKA.

The signal sequence occupies residues 1 to 30; that stretch reads MNGGAERAMRSLPSLGGLALLCCAAAAAAA. Residues 31–514 lie on the Extracellular side of the membrane; the sequence is AVASAASAGN…LADVSWTQFN (484 aa). A disordered region spans residues 38–199; it reads AGNVTGGGGA…PATEAPSSPP (162 aa). Asn-40 carries N-linked (GlcNAc...) asparagine glycosylation. Low complexity-rich tracts occupy residues 68 to 85 and 139 to 166; these read PRAT…PPRA and APTR…TVPA. The span at 167-176 shows a compositional bias: pro residues; that stretch reads PTTPRTPTPD. Residue Asn-182 is glycosylated (N-linked (GlcNAc...) asparagine). Residues 187 to 199 are compositionally biased toward pro residues; that stretch reads PTPPATEAPSSPP. 20 disulfide bridges follow: Cys-204/Cys-217, Cys-206/Cys-224, Cys-226/Cys-235, Cys-238/Cys-251, Cys-254/Cys-266, Cys-256/Cys-272, Cys-274/Cys-283, Cys-286/Cys-298, Cys-301/Cys-310, Cys-303/Cys-317, Cys-320/Cys-329, Cys-332/Cys-346, Cys-349/Cys-360, Cys-351/Cys-371, Cys-374/Cys-383, Cys-386/Cys-397, Cys-400/Cys-415, Cys-402/Cys-422, Cys-425/Cys-434, and Cys-437/Cys-449. 5 consecutive Laminin EGF-like domains span residues 204–253, 254–300, 301–348, 349–399, and 400–451; these read CNCS…LCQP, CDCS…GCLP, CQCN…ECLR, CPCS…ICRK, and CQCH…NCIK. Asn-205 and Asn-218 each carry an N-linked (GlcNAc...) asparagine glycan. Asn-245 carries N-linked (GlcNAc...) asparagine glycosylation. The N-linked (GlcNAc...) asparagine glycan is linked to Asn-267. Asn-305 carries N-linked (GlcNAc...) asparagine glycosylation. Asn-428 carries an N-linked (GlcNAc...) asparagine glycan. N-linked (GlcNAc...) asparagine glycans are attached at residues Asn-468, Asn-481, and Asn-500. The chain crosses the membrane as a helical span at residues 515–535; sequence IIILTVIIIVVVLLMGFVGAV. Residues 536–602 lie on the Cytoplasmic side of the membrane; the sequence is YMYREYQNRK…LTTPIHNYKA (67 aa).

It localises to the membrane. The polypeptide is Multiple epidermal growth factor-like domains protein 9 (MEGF9) (Homo sapiens (Human)).